Reading from the N-terminus, the 505-residue chain is Deoxyguanosinetriphosphate triphosphohydrolase (505 aa).

Residues 66–273 (RLTHSMEVQQ…MEAADDISYC (208 aa)) enclose the HD domain.

This sequence belongs to the dGTPase family. Type 1 subfamily. In terms of assembly, homotetramer. The cofactor is Mg(2+).

It carries out the reaction dGTP + H2O = 2'-deoxyguanosine + triphosphate + H(+). Functionally, dGTPase preferentially hydrolyzes dGTP over the other canonical NTPs. The sequence is that of Deoxyguanosinetriphosphate triphosphohydrolase from Escherichia coli O139:H28 (strain E24377A / ETEC).